Consider the following 278-residue polypeptide: HTH-type transcriptional activator RhaS (278 aa).

An HTH araC/xylS-type domain is found at 174–272 (NQLMAWLEEH…NWSPRDIRQG (99 aa)). 2 DNA-binding regions (H-T-H motif) span residues 191–212 (EAVA…KQHT) and 239–262 (VTEI…RREF).

As to quaternary structure, binds DNA as a dimer.

The protein localises to the cytoplasm. Activates expression of the rhaBAD and rhaT operons. The chain is HTH-type transcriptional activator RhaS from Salmonella schwarzengrund (strain CVM19633).